A 705-amino-acid chain; its full sequence is FAD-dependent monooxygenase ATEG_03635 (705 aa).

Residues 86–115, valine 208, 308–310, and serine 408 contribute to the FAD site; these read DVLI…IVDK and RFY.

The protein belongs to the PheA/TfdB FAD monooxygenase family. Requires FAD as cofactor.

It functions in the pathway secondary metabolite biosynthesis. In terms of biological role, FAD-dependent monooxygenase; part of the cluster A that mediates the biosynthesis of azasperpyranones, members of the azaphilone family that exhibit anti-cancer activities. Azasperpyranones are synthesized by 2 clusters, A and B. Cluster A is responsible for the production of the polyhydric phenol moiety while the azaphilonoid scaffold is produced by the cluster B. The non-reducing polyketide synthase ATEG_03629 produces 5-methyl orsellinic acid, which is then reduced to 5-methyl orsellinic aldehyde by the NRPS-like protein ATEG_03630. 5-methyl orsellinic aldehyde is then first hydroxylated by the FAD-dependent monooxygenase ATEG_03635 and subsequently hydroxylated by the cytochrome P450 monooxygenase ATEG_03631 to produce the unstable polyhydric phenol precursor of azasperpyranones. On the other hand, the polyketide synthase ATEG_07659 is responsible for producing the 3,5-dimethyloctadienone moiety from acetyl-CoA, three malonyl-CoA, and two S-adenosyl methionines (SAM). The 3,5-dimethyloctadienone moiety is then loaded onto the SAT domain of ATEG_07661 and extended with four malonyl-CoA and one SAM, which leads to the formation of 2,4-dihydroxy-6-(5,7-dimethyl-2-oxo-trans-3-trans-5-nonadienyl)-3-methylbenzaldehyde (compound 8) after reductive release and aldol condensation. The FAD-dependent monooxygenase ATEG_07662 is the next enzyme in the biosynthesis sequence and hydroxylates the side chain at the benzylic position of compound 8. In Aspergillus nidulans, afoF, the ortholog of the FAD-dependent oxygenase ATEG_07660, is the key enzyme for the biosynthesis of asperfuranone by catalyzing the hydroxylation at C-8 of to prevent the formation of a six-membered ring hemiacetal intermediate and thus facilitating the formation of a five-membered ring to produce asperfuranone. In Aspergillus terreus, ATEG_07660 is probably not functional, which leads to the formation of the six-membered ring hemiacetal intermediate presperpyranone instead of asperfuranone. Finally, ATEG_03636 is involved in the condensation of the polyhydric phenol moiety produced by cluster A and the perasperpyranone precursor produced by cluster B, to yield azasperpyranone A. Further modifications of azasperpyranone A result in the production of derivatives, including azasperpyranone B to F. In Aspergillus terreus (strain NIH 2624 / FGSC A1156), this protein is FAD-dependent monooxygenase ATEG_03635.